The sequence spans 265 residues: Hydroxyethylthiazole kinase (265 aa).

Position 50 (M50) interacts with substrate. R125 and T171 together coordinate ATP. G198 serves as a coordination point for substrate.

This sequence belongs to the Thz kinase family. The cofactor is Mg(2+).

The enzyme catalyses 5-(2-hydroxyethyl)-4-methylthiazole + ATP = 4-methyl-5-(2-phosphooxyethyl)-thiazole + ADP + H(+). The protein operates within cofactor biosynthesis; thiamine diphosphate biosynthesis; 4-methyl-5-(2-phosphoethyl)-thiazole from 5-(2-hydroxyethyl)-4-methylthiazole: step 1/1. In terms of biological role, catalyzes the phosphorylation of the hydroxyl group of 4-methyl-5-beta-hydroxyethylthiazole (THZ). This is Hydroxyethylthiazole kinase from Salmonella newport (strain SL254).